The sequence spans 860 residues: M-phase phosphoprotein 8 (860 aa).

An N-acetylmethionine modification is found at methionine 1. Phosphoserine occurs at positions 51, 85, 136, and 138. Residues 59 to 118 (FEVEKILDMKTEGGKVLYKVRWKGYTSDDDTWEPEIHLEDCKEVLLEFRKKIAENKAKAV) form the Chromo domain. The segment at 80 to 87 (WKGYTSDD) is histone H3K9me3 binding. A compositionally biased stretch (polar residues) spans 129–141 (NDIFEANSDSDQQ). Residues 129-191 (NDIFEANSDS…SKPDLESSLE (63 aa)) are disordered. At threonine 144 the chain carries Phosphothreonine. Serine 149 and serine 164 each carry phosphoserine; by CDK1. Basic and acidic residues-rich tracts occupy residues 159–169 (QREEKSPDDLK) and 177–186 (KLKDKSKPDL). Residues serine 188, serine 189, and serine 192 each carry the phosphoserine modification. A compositionally biased stretch (basic and acidic residues) spans 206 to 249 (AKEELKESKKPKKDEVKETKELKKVKKGEIRDLKTKTREDPKEN). A disordered region spans residues 206–440 (AKEELKESKK…GRKEPKGLKT (235 aa)). The span at 259 to 268 (ESQVESESSV) shows a compositional bias: low complexity. Residues serine 266, serine 272, and serine 279 each carry the phosphoserine modification. Positions 280-314 (EGLHSDSREEKQNTKSARERAGQDMGLEHGFEKPL) are enriched in basic and acidic residues. At serine 319 the chain carries Phosphoserine. The residue at position 334 (threonine 334) is a Phosphothreonine; by CDK1. The span at 336 to 377 (RKAEDTRENRKLENKNAFLEKKTVPKKQRNQDRSKSAAELEK) shows a compositional bias: basic and acidic residues. At threonine 385 the chain carries Phosphothreonine; by CDK1. Residues serine 392, serine 400, and serine 403 each carry the phosphoserine modification. The span at 408–440 (KETKRNESKEKYQKRHDSDKEEKGRKEPKGLKT) shows a compositional bias: basic and acidic residues. The interval 431 to 560 (GRKEPKGLKT…HLDGKDENFA (130 aa)) is interaction with humanin. The residue at position 454 (threonine 454) is a Phosphothreonine. The disordered stretch occupies residues 458–496 (KNDVSENNRKREEIPLDFKTIDDHKTKENKQSLKERRNT). ANK repeat units follow at residues 600 to 629 (SGMT…KVNG), 633 to 662 (NGTT…FVNV), 666 to 695 (NGET…DCNI), and 699 to 728 (HQNS…TLSR).

As to quaternary structure, homodimer. Interacts (via chromo domain) with histone H3K9me3. Has the highest affinity for H3K9me3, and lesser affinity for H3K9me2 and H3K9me1. Component of the HUSH complex; at least composed of TASOR, PPHLN1 and MPHOSPH8. Interacts with DNMT3, EHMT1 and SETDB1. Interacts with MORC2; the interaction associateS MORC2 with the HUSH complex which recruits MORC2 to heterochromatic loci. Interacts with ZNF638; leading to recruitment of the HUSH complex to unintegrated retroviral DNA. Interacts with TASOR. Interacts with humanin. Phosphorylated in M (mitotic) phase. Phosphorylation by CDK1 promotes dissociation from chromatin.

It is found in the nucleus. It localises to the chromosome. In terms of biological role, heterochromatin component that specifically recognizes and binds methylated 'Lys-9' of histone H3 (H3K9me) and promotes recruitment of proteins that mediate epigenetic repression. Mediates recruitment of the HUSH complex to H3K9me3 sites: the HUSH complex is recruited to genomic loci rich in H3K9me3 and is required to maintain transcriptional silencing by promoting recruitment of SETDB1, a histone methyltransferase that mediates further deposition of H3K9me3, as well as MORC2. Binds H3K9me and promotes DNA methylation by recruiting DNMT3A to target CpG sites; these can be situated within the coding region of the gene. Mediates down-regulation of CDH1 expression. Also represses L1 retrotransposons in collaboration with MORC2 and, probably, SETDB1, the silencing is dependent of repressive epigenetic modifications, such as H3K9me3 mark. Silencing events often occur within introns of transcriptionally active genes, and lead to the down-regulation of host gene expression. The HUSH complex is also involved in the silencing of unintegrated retroviral DNA by being recruited by ZNF638: some part of the retroviral DNA formed immediately after infection remains unintegrated in the host genome and is transcriptionally repressed. In Homo sapiens (Human), this protein is M-phase phosphoprotein 8.